Here is a 390-residue protein sequence, read N- to C-terminus: Succinate--CoA ligase [ADP-forming] subunit beta (390 aa).

Positions 9–244 constitute an ATP-grasp domain; that stretch reads KSLFQQYGIP…ISQEDVREAK (236 aa). ATP-binding residues include Lys-46, Glu-99, Leu-102, and Glu-107. Asn-199 and Asp-213 together coordinate Mg(2+). Residues Asn-264 and 321 to 323 contribute to the substrate site; that span reads GIV.

The protein belongs to the succinate/malate CoA ligase beta subunit family. In terms of assembly, heterotetramer of two alpha and two beta subunits. Mg(2+) is required as a cofactor.

The enzyme catalyses succinate + ATP + CoA = succinyl-CoA + ADP + phosphate. It carries out the reaction GTP + succinate + CoA = succinyl-CoA + GDP + phosphate. It functions in the pathway carbohydrate metabolism; tricarboxylic acid cycle; succinate from succinyl-CoA (ligase route): step 1/1. Its function is as follows. Succinyl-CoA synthetase functions in the citric acid cycle (TCA), coupling the hydrolysis of succinyl-CoA to the synthesis of either ATP or GTP and thus represents the only step of substrate-level phosphorylation in the TCA. The beta subunit provides nucleotide specificity of the enzyme and binds the substrate succinate, while the binding sites for coenzyme A and phosphate are found in the alpha subunit. This is Succinate--CoA ligase [ADP-forming] subunit beta from Hydrogenovibrio crunogenus (strain DSM 25203 / XCL-2) (Thiomicrospira crunogena).